A 316-amino-acid polypeptide reads, in one-letter code: UDP-N-acetylglucosamine transporter yea4 (316 aa).

The Cytoplasmic segment spans residues Met-1–Ala-3. Residues Ser-4–Val-24 form a helical membrane-spanning segment. At Arg-25–Gly-31 the chain is on the lumenal side. The helical transmembrane segment at Ile-32–Leu-52 threads the bilayer. Over Asn-53–Arg-67 the chain is Cytoplasmic. The helical transmembrane segment at Trp-68–Phe-88 threads the bilayer. Residues Asp-89–Ser-120 lie on the Lumenal side of the membrane. Residues Leu-121–Ala-141 traverse the membrane as a helical segment. Topologically, residues Lys-142–Arg-153 are cytoplasmic. Residues Phe-154–Val-174 form a helical membrane-spanning segment. Residues Leu-175 to Arg-187 are Lumenal-facing. A helical membrane pass occupies residues Glu-188 to Ile-208. Over Arg-209–Asp-214 the chain is Cytoplasmic. The chain crosses the membrane as a helical span at residues Leu-215–Phe-235. At Asn-236–Ser-274 the chain is on the lumenal side. A helical membrane pass occupies residues Leu-275 to Gly-295. The Cytoplasmic portion of the chain corresponds to Ser-296–Asp-316.

This sequence belongs to the nucleotide-sugar transporter family. SLC35B subfamily.

The protein localises to the endoplasmic reticulum. Its subcellular location is the endoplasmic reticulum membrane. In terms of biological role, sugar transporter that specifically mediates the transport of UDP-N-acetylglucosamine (UDP-GlcNAc) and is required for cell wall chitin synthesis. The sequence is that of UDP-N-acetylglucosamine transporter yea4 (yea4) from Schizosaccharomyces pombe (strain 972 / ATCC 24843) (Fission yeast).